The chain runs to 126 residues: uncharacterized protein (126 aa).

2 disordered regions span residues 15–72 (PEWG…SDPQ) and 93–126 (TQIP…TTSN). 2 stretches are compositionally biased toward basic and acidic residues: residues 29–46 (DPLD…RVPE) and 55–64 (VQEDSREHGQ).

This is an uncharacterized protein from Homo sapiens (Human).